A 375-amino-acid polypeptide reads, in one-letter code: Succinyl-diaminopimelate desuccinylase (375 aa).

His-66 lines the Zn(2+) pocket. Asp-68 is a catalytic residue. Asp-99 contributes to the Zn(2+) binding site. Residue Glu-133 is the Proton acceptor of the active site. Residues Glu-134, Glu-162, and His-348 each contribute to the Zn(2+) site.

Belongs to the peptidase M20A family. DapE subfamily. As to quaternary structure, homodimer. Requires Zn(2+) as cofactor. Co(2+) serves as cofactor.

It catalyses the reaction N-succinyl-(2S,6S)-2,6-diaminopimelate + H2O = (2S,6S)-2,6-diaminopimelate + succinate. The protein operates within amino-acid biosynthesis; L-lysine biosynthesis via DAP pathway; LL-2,6-diaminopimelate from (S)-tetrahydrodipicolinate (succinylase route): step 3/3. Catalyzes the hydrolysis of N-succinyl-L,L-diaminopimelic acid (SDAP), forming succinate and LL-2,6-diaminopimelate (DAP), an intermediate involved in the bacterial biosynthesis of lysine and meso-diaminopimelic acid, an essential component of bacterial cell walls. This chain is Succinyl-diaminopimelate desuccinylase, found in Escherichia coli O139:H28 (strain E24377A / ETEC).